Here is a 335-residue protein sequence, read N- to C-terminus: Urokinase plasminogen activator surface receptor (335 aa).

Positions 1 to 22 (MGHPPLLPLLLLLHTCVPASWG) are cleaved as a signal peptide. 3 consecutive UPAR/Ly6 domains span residues 23 to 114 (LRCM…RSRY), 115 to 213 (LECI…PQNG), and 214 to 305 (RQCY…YRSG). 3 disulfides stabilise this stretch: Cys25–Cys46, Cys28–Cys34, and Cys39–Cys67. N-linked (GlcNAc...) asparagine glycosylation occurs at Asn74. Cystine bridges form between Cys93-Cys98, Cys117-Cys144, Cys120-Cys127, Cys137-Cys169, Cys175-Cys192, Cys193-Cys198, Cys216-Cys244, Cys219-Cys227, Cys237-Cys263, Cys269-Cys287, and Cys288-Cys293. An N-linked (GlcNAc...) asparagine glycan is attached at Asn124. 4 N-linked (GlcNAc...) asparagine glycosylation sites follow: Asn184, Asn194, Asn222, and Asn255. Gly305 carries GPI-anchor amidated glycine lipidation. Positions 306 to 335 (AAPQPGPAHLSLTITLLMTARLWGGTLLWT) are cleaved as a propeptide — removed in mature form.

As to quaternary structure, monomer. Interacts (via the UPAR/Ly6 domains) with SRPX2. Interacts with MRC2. Interacts with FAP (seprase); the interaction occurs at the cell surface of invadopodia membrane. Interacts with SORL1 (via N-terminal ectodomain); this interaction decreases PLAUR internalization. The ternary complex composed of PLAUR-PLAU-SERPINE1 also interacts with SORL1. Interacts with CD82; this interaction prevents PLAUR from binding to its high affinity ligand PLAU.

The protein localises to the cell membrane. Its subcellular location is the cell projection. The protein resides in the invadopodium membrane. Acts as a receptor for urokinase plasminogen activator. Plays a role in localizing and promoting plasmin formation. Mediates the proteolysis-independent signal transduction activation effects of U-PA. It is subject to negative-feedback regulation by U-PA which cleaves it into an inactive form. The sequence is that of Urokinase plasminogen activator surface receptor (PLAUR) from Pan troglodytes (Chimpanzee).